Reading from the N-terminus, the 510-residue chain is Histidine ammonia-lyase (510 aa).

A cross-link (5-imidazolinone (Ala-Gly)) is located at residues Ala-143 to Gly-145. Ser-144 bears the 2,3-didehydroalanine (Ser) mark.

Belongs to the PAL/histidase family. Post-translationally, contains an active site 4-methylidene-imidazol-5-one (MIO), which is formed autocatalytically by cyclization and dehydration of residues Ala-Ser-Gly.

Its subcellular location is the cytoplasm. It carries out the reaction L-histidine = trans-urocanate + NH4(+). The protein operates within amino-acid degradation; L-histidine degradation into L-glutamate; N-formimidoyl-L-glutamate from L-histidine: step 1/3. This chain is Histidine ammonia-lyase, found in Aliivibrio fischeri (strain ATCC 700601 / ES114) (Vibrio fischeri).